A 44-amino-acid polypeptide reads, in one-letter code: Thymosin beta-4 (44 aa).

Composition is skewed to basic and acidic residues over residues 1–25 (MSDKPDMAEIEKFDKAKLKKTETQE) and 33–44 (ETIEQEKQTSES). The tract at residues 1 to 44 (MSDKPDMAEIEKFDKAKLKKTETQEKNPLPSKETIEQEKQTSES) is disordered. Serine 2 bears the N-acetylserine mark.

The protein belongs to the thymosin beta family. In terms of tissue distribution, spleen, kidney, heart, and oocytes.

It localises to the cytoplasm. The protein resides in the cytoskeleton. Its function is as follows. Plays an important role in the organization of the cytoskeleton. Binds to and sequesters actin monomers (G actin) and therefore inhibits actin polymerization. This Xenopus laevis (African clawed frog) protein is Thymosin beta-4 (tmsb4).